A 673-amino-acid polypeptide reads, in one-letter code: MGPSRSFQNLLLLLLPLALALCSAAASGEASRRFWVENDTFWKDGAPFQIVGGDVHYFRIVPEYWKDRLLRAKALGLNTIQTYVPWNLHEPKPLSWEFKGFTDIESYLRLAHELDMLVMLRVGPYICGEWDLGGFPPWLLTIEPTIELRSSDSTYLSLVDRWWGVLLPKIAPLLYSNGGPIIMVQIENEFGSFGDDKNYLHYLVEVARRYLGNDIMLYTTDGGAIGNLKNGTILQDDVFAAVDFDTGSNPWPIFQLQKEYNLPGKSAPLSSEFYTGWLTHWGERIATTDASSTAKALKRILCRNGSAVLYMAHGGTNFGFYNGANTGQNESDYKADLTSYDYDAPIREYGDVHNAKYKALRRVIHECTGIPLLQLPSKIERASYGLVEVQKVASLFDVIHNISDALKVAFSEQPLSMELMGQMFGFLLYTSEYQEKHSSSILSIPKVHDRAQVFVSCSHGDVRKPRYVGIVERWSSKTLQIPSLSCSSNVSLYILVENMGRVNYGPYIFDQKGILSSVEIDGIILRHWKMHPVSLNAVGNLSKLQLIMQMTDAEASKVSIYGDSENKLQDVSLYLNEGISEEPAFYEGHFHIDSESEKKDTFISFRGWNKGVAFVNNFNIGRFWPAIGPQCALYVPAPILKPGDNVIVIFELHSPNPELTIKLVKDPDFTCGQ.

Residues M1 to A20 form the signal peptide. N-linked (GlcNAc...) asparagine glycosylation occurs at N38. The Proton donor role is filled by E189. N-linked (GlcNAc...) asparagine glycosylation is present at N230. The active-site Nucleophile is E272. N-linked (GlcNAc...) asparagine glycans are attached at residues N304, N329, N401, N489, and N540.

Belongs to the glycosyl hydrolase 35 family.

The protein localises to the secreted. It is found in the extracellular space. It localises to the apoplast. The enzyme catalyses Hydrolysis of terminal non-reducing beta-D-galactose residues in beta-D-galactosides.. The sequence is that of Beta-galactosidase 8 from Oryza sativa subsp. japonica (Rice).